The following is a 393-amino-acid chain: Phosphopentomutase (393 aa).

Asp13, Asp286, His291, Asp327, His328, and His339 together coordinate Mn(2+).

Belongs to the phosphopentomutase family. Mn(2+) is required as a cofactor.

The protein resides in the cytoplasm. It carries out the reaction 2-deoxy-alpha-D-ribose 1-phosphate = 2-deoxy-D-ribose 5-phosphate. It catalyses the reaction alpha-D-ribose 1-phosphate = D-ribose 5-phosphate. Its pathway is carbohydrate degradation; 2-deoxy-D-ribose 1-phosphate degradation; D-glyceraldehyde 3-phosphate and acetaldehyde from 2-deoxy-alpha-D-ribose 1-phosphate: step 1/2. Its function is as follows. Isomerase that catalyzes the conversion of deoxy-ribose 1-phosphate (dRib-1-P) and ribose 1-phosphate (Rib-1-P) to deoxy-ribose 5-phosphate (dRib-5-P) and ribose 5-phosphate (Rib-5-P), respectively. In Symbiobacterium thermophilum (strain DSM 24528 / JCM 14929 / IAM 14863 / T), this protein is Phosphopentomutase.